The following is a 670-amino-acid chain: DNA ligase (670 aa).

Residues 33–37, 82–83, and glutamate 114 each bind NAD(+); these read DAEYD and SL. The N6-AMP-lysine intermediate role is filled by lysine 116. NAD(+) is bound by residues arginine 137, glutamate 173, lysine 291, and lysine 315. 4 residues coordinate Zn(2+): cysteine 409, cysteine 412, cysteine 427, and cysteine 433. Residues 592 to 670 form the BRCT domain; it reads VQSDRLSGNT…ENALAELLSD (79 aa).

It belongs to the NAD-dependent DNA ligase family. LigA subfamily. Mg(2+) serves as cofactor. It depends on Mn(2+) as a cofactor.

It catalyses the reaction NAD(+) + (deoxyribonucleotide)n-3'-hydroxyl + 5'-phospho-(deoxyribonucleotide)m = (deoxyribonucleotide)n+m + AMP + beta-nicotinamide D-nucleotide.. Its function is as follows. DNA ligase that catalyzes the formation of phosphodiester linkages between 5'-phosphoryl and 3'-hydroxyl groups in double-stranded DNA using NAD as a coenzyme and as the energy source for the reaction. It is essential for DNA replication and repair of damaged DNA. The polypeptide is DNA ligase (Idiomarina loihiensis (strain ATCC BAA-735 / DSM 15497 / L2-TR)).